The chain runs to 520 residues: Pleckstrin homology domain-containing family A member 8 (520 aa).

The region spanning 1 to 93 (MEGVLYKWTN…WLVALGSAKA (93 aa)) is the PH domain. Threonine 139 bears the Phosphothreonine mark. Residue serine 145 is modified to Phosphoserine. Threonine 153 carries the phosphothreonine modification. A compositionally biased stretch (polar residues) spans 255–268 (ISSEENTDGNTTVQ). Residues 255 to 303 (ISSEENTDGNTTVQGERMKEDGEENLESHDRDLAQPGSDSVCSPESPWE) are disordered. Positions 270 to 287 (ERMKEDGEENLESHDRDL) are enriched in basic and acidic residues. The interval 311-520 (TFFSTMNTSF…IHGLESDEVV (210 aa)) is glycolipid transfer protein homology domain.

As to quaternary structure, homodimer. Interacts with ARF1; the interaction together with phosphatidylinositol 4-phosphate binding is required for FAPP2 GlcCer transfer ability.

The protein resides in the golgi apparatus. The protein localises to the trans-Golgi network membrane. It localises to the membrane. Functionally, cargo transport protein that is required for apical transport from the trans-Golgi network (TGN). Transports AQP2 from the trans-Golgi network (TGN) to sites of AQP2 phosphorylation. Mediates the non-vesicular transport of glucosylceramide (GlcCer) from the trans-Golgi network (TGN) to the plasma membrane and plays a pivotal role in the synthesis of complex glycosphingolipids. Binding of both phosphatidylinositol 4-phosphate (PIP) and ARF1 are essential for the GlcCer transfer ability. Also required for primary cilium formation, possibly by being involved in the transport of raft lipids to the apical membrane, and for membrane tubulation. This Rattus norvegicus (Rat) protein is Pleckstrin homology domain-containing family A member 8 (Plekha8).